Reading from the N-terminus, the 349-residue chain is tRNA pseudouridine synthase D (349 aa).

Phe27 lines the substrate pocket. Asp80 serves as the catalytic Nucleophile. Asn129 contributes to the substrate binding site. The region spanning Gly155–Leu303 is the TRUD domain. Phe329 lines the substrate pocket.

It belongs to the pseudouridine synthase TruD family.

The enzyme catalyses uridine(13) in tRNA = pseudouridine(13) in tRNA. Functionally, responsible for synthesis of pseudouridine from uracil-13 in transfer RNAs. In Salmonella dublin (strain CT_02021853), this protein is tRNA pseudouridine synthase D.